Consider the following 725-residue polypeptide: Ribonuclease R (725 aa).

The region spanning 236–559 (RKDLRDKLII…QLHRLIKQMV (324 aa)) is the RNB domain. The S1 motif domain maps to 611–689 (GKSLKAQIVS…NLGKVDVVLE (79 aa)).

The protein belongs to the RNR ribonuclease family. RNase R subfamily.

It localises to the cytoplasm. The catalysed reaction is Exonucleolytic cleavage in the 3'- to 5'-direction to yield nucleoside 5'-phosphates.. Its function is as follows. 3'-5' exoribonuclease that releases 5'-nucleoside monophosphates and is involved in maturation of structured RNAs. This is Ribonuclease R from Mycoplasmopsis pulmonis (strain UAB CTIP) (Mycoplasma pulmonis).